Consider the following 476-residue polypeptide: Bifunctional protein HldE (476 aa).

Positions 1 to 318 (MKPILPDYNN…AEAIHGSRDT (318 aa)) are ribokinase. 195–198 (NMSE) provides a ligand contact to ATP. Aspartate 264 is a catalytic residue. The segment at 344-476 (MTNGCFDILH…IIDAIKGGRG (133 aa)) is cytidylyltransferase.

It in the N-terminal section; belongs to the carbohydrate kinase PfkB family. In the C-terminal section; belongs to the cytidylyltransferase family. In terms of assembly, homodimer.

The catalysed reaction is D-glycero-beta-D-manno-heptose 7-phosphate + ATP = D-glycero-beta-D-manno-heptose 1,7-bisphosphate + ADP + H(+). It carries out the reaction D-glycero-beta-D-manno-heptose 1-phosphate + ATP + H(+) = ADP-D-glycero-beta-D-manno-heptose + diphosphate. It functions in the pathway nucleotide-sugar biosynthesis; ADP-L-glycero-beta-D-manno-heptose biosynthesis; ADP-L-glycero-beta-D-manno-heptose from D-glycero-beta-D-manno-heptose 7-phosphate: step 1/4. Its pathway is nucleotide-sugar biosynthesis; ADP-L-glycero-beta-D-manno-heptose biosynthesis; ADP-L-glycero-beta-D-manno-heptose from D-glycero-beta-D-manno-heptose 7-phosphate: step 3/4. It participates in bacterial outer membrane biogenesis; LPS core biosynthesis. Its function is as follows. Catalyzes the phosphorylation of D-glycero-D-manno-heptose 7-phosphate at the C-1 position to selectively form D-glycero-beta-D-manno-heptose-1,7-bisphosphate. Functionally, catalyzes the ADP transfer from ATP to D-glycero-beta-D-manno-heptose 1-phosphate, yielding ADP-D-glycero-beta-D-manno-heptose. The chain is Bifunctional protein HldE from Vibrio vulnificus (strain CMCP6).